We begin with the raw amino-acid sequence, 365 residues long: Casein kinase I homolog hhp1 (365 aa).

One can recognise a Protein kinase domain in the interval 11 to 279; sequence YRIGRKIGSG…YLRKLFRDLF (269 aa). ATP is bound by residues 17 to 25 and Lys-40; that span reads IGSGSFGDI. The active-site Proton acceptor is the Asp-130. Residues 301 to 311 are compositionally biased toward low complexity; it reads DQQHQQQLQQQ. Positions 301–365 are disordered; the sequence is DQQHQQQLQQ…TGAQYINRPN (65 aa). Polar residues predominate over residues 343 to 365; sequence INTTVPVINDPSATGAQYINRPN.

This sequence belongs to the protein kinase superfamily. CK1 Ser/Thr protein kinase family. Casein kinase I subfamily.

The protein localises to the nucleus. The catalysed reaction is L-seryl-[protein] + ATP = O-phospho-L-seryl-[protein] + ADP + H(+). It catalyses the reaction L-threonyl-[protein] + ATP = O-phospho-L-threonyl-[protein] + ADP + H(+). In terms of biological role, involved in DNA repair. Has a probable role in repairing alkylated DNA and may regulate the activity of protein(s) involved in double strand break repair caused by gamma rays. The chain is Casein kinase I homolog hhp1 (hhp1) from Schizosaccharomyces pombe (strain 972 / ATCC 24843) (Fission yeast).